The sequence spans 161 residues: uncharacterized protein (161 aa).

A disordered region spans residues 126-161 (TPSNCGESSTSSGQSSGDESNCSLRTHGVYTRGEQH). Residues 128-148 (SNCGESSTSSGQSSGDESNCS) are compositionally biased toward low complexity.

This sequence belongs to the herpesviridae US1 family.

This is an uncharacterized protein from Human cytomegalovirus (strain AD169) (HHV-5).